Here is a 48-residue protein sequence, read N- to C-terminus: Glycine-rich RNA-binding protein 3 (48 aa).

The protein is Glycine-rich RNA-binding protein 3 of Populus euphratica (Euphrates poplar).